The sequence spans 107 residues: Nucleoid-associated protein PHZ_c0369 (107 aa).

The protein belongs to the YbaB/EbfC family. In terms of assembly, homodimer.

The protein resides in the cytoplasm. Its subcellular location is the nucleoid. Binds to DNA and alters its conformation. May be involved in regulation of gene expression, nucleoid organization and DNA protection. The polypeptide is Nucleoid-associated protein PHZ_c0369 (Phenylobacterium zucineum (strain HLK1)).